A 213-amino-acid polypeptide reads, in one-letter code: NADH-quinone oxidoreductase subunit C (213 aa).

This sequence belongs to the complex I 30 kDa subunit family. As to quaternary structure, NDH-1 is composed of 15 different subunits. Subunits NuoB, C, D, E, F, and G constitute the peripheral sector of the complex.

It localises to the cell membrane. It catalyses the reaction a quinone + NADH + 5 H(+)(in) = a quinol + NAD(+) + 4 H(+)(out). NDH-1 shuttles electrons from NADH, via FMN and iron-sulfur (Fe-S) centers, to quinones in the respiratory chain. The immediate electron acceptor for the enzyme in this species is believed to be a menaquinone. Couples the redox reaction to proton translocation (for every two electrons transferred, four hydrogen ions are translocated across the cytoplasmic membrane), and thus conserves the redox energy in a proton gradient. The polypeptide is NADH-quinone oxidoreductase subunit C (Deinococcus geothermalis (strain DSM 11300 / CIP 105573 / AG-3a)).